A 368-amino-acid chain; its full sequence is Peptide chain release factor 2 (368 aa).

Q250 carries the post-translational modification N5-methylglutamine.

The protein belongs to the prokaryotic/mitochondrial release factor family. In terms of processing, methylated by PrmC. Methylation increases the termination efficiency of RF2.

It is found in the cytoplasm. Peptide chain release factor 2 directs the termination of translation in response to the peptide chain termination codons UGA and UAA. The chain is Peptide chain release factor 2 from Mycolicibacterium smegmatis (strain ATCC 700084 / mc(2)155) (Mycobacterium smegmatis).